Here is a 499-residue protein sequence, read N- to C-terminus: MVLLYSQASWDKRSKADALVLPFWMKNSKAQEAAVVDEDYKLVYQNALSNFSGKKGETAFLFGNDHTKEQKIVLLGLGKSEEVSGTTVLEAYAQATTVLRKAKCKTVNILLPTISQLRFSVEEFLTNLAAGVLSLNYNYPTYHKVDTSLPFLEKVTVMGIVSKVGDKIFRKEESLFEGVYLTRDLVNTNADEVTPEKLAAVAKDLAGEFASLDVKILDRKAILKEKMGLLAAVAKGAAVEPRFIVLDYQGKPKSKDRTVLIGKGVTFDSGGLDLKPGKAMITMKEDMAGAATVLGIFSALASLELPINVTGIIPATENAIGSAAYKMGDVYVGMTGLSVEIGSTDAEGRLILADAISYALKYCNPTRIIDFATLTGAMVVSLGESVAGFFANNDVLARDLAEASSETGEALWRMPLVEKYDQALHSDIADMKNIGSNRAGSITAALFLQRFLEDNPVAWAHLDIAGTAYHEKEELPYPKYATGFGVRCLIHYMEKFLSK.

Residues Lys263 and Asp268 each contribute to the Mn(2+) site. The active site involves Lys275. Positions 286, 345, and 347 each coordinate Mn(2+). Residue Arg349 is part of the active site.

This sequence belongs to the peptidase M17 family. The cofactor is Mn(2+).

The protein resides in the cytoplasm. It catalyses the reaction Release of an N-terminal amino acid, Xaa-|-Yaa-, in which Xaa is preferably Leu, but may be other amino acids including Pro although not Arg or Lys, and Yaa may be Pro. Amino acid amides and methyl esters are also readily hydrolyzed, but rates on arylamides are exceedingly low.. The catalysed reaction is Release of an N-terminal amino acid, preferentially leucine, but not glutamic or aspartic acids.. In terms of biological role, presumably involved in the processing and regular turnover of intracellular proteins. Catalyzes the removal of unsubstituted N-terminal amino acids from various peptides. This is Probable cytosol aminopeptidase (pepA) from Chlamydia trachomatis serovar D (strain ATCC VR-885 / DSM 19411 / UW-3/Cx).